We begin with the raw amino-acid sequence, 461 residues long: Siroheme synthase (461 aa).

The segment at 1 to 204 (MRYLPLFVYL…GNFRKANRVI (204 aa)) is precorrin-2 dehydrogenase /sirohydrochlorin ferrochelatase. Residues 22–23 (IV) and 43–44 (KT) each bind NAD(+). At serine 128 the chain carries Phosphoserine. Residues 218 to 461 (GSVSLVGAGP…HNEISWFGNG (244 aa)) form a uroporphyrinogen-III C-methyltransferase region. Proline 227 contacts S-adenosyl-L-methionine. The active-site Proton acceptor is the aspartate 250. Lysine 272 serves as the catalytic Proton donor. S-adenosyl-L-methionine is bound by residues 303-305 (GGD), isoleucine 308, methionine 386, and glycine 415.

This sequence in the N-terminal section; belongs to the precorrin-2 dehydrogenase / sirohydrochlorin ferrochelatase family. It in the C-terminal section; belongs to the precorrin methyltransferase family.

The enzyme catalyses uroporphyrinogen III + 2 S-adenosyl-L-methionine = precorrin-2 + 2 S-adenosyl-L-homocysteine + H(+). It carries out the reaction precorrin-2 + NAD(+) = sirohydrochlorin + NADH + 2 H(+). It catalyses the reaction siroheme + 2 H(+) = sirohydrochlorin + Fe(2+). The protein operates within cofactor biosynthesis; adenosylcobalamin biosynthesis; precorrin-2 from uroporphyrinogen III: step 1/1. It functions in the pathway cofactor biosynthesis; adenosylcobalamin biosynthesis; sirohydrochlorin from precorrin-2: step 1/1. It participates in porphyrin-containing compound metabolism; siroheme biosynthesis; precorrin-2 from uroporphyrinogen III: step 1/1. Its pathway is porphyrin-containing compound metabolism; siroheme biosynthesis; siroheme from sirohydrochlorin: step 1/1. The protein operates within porphyrin-containing compound metabolism; siroheme biosynthesis; sirohydrochlorin from precorrin-2: step 1/1. Multifunctional enzyme that catalyzes the SAM-dependent methylations of uroporphyrinogen III at position C-2 and C-7 to form precorrin-2 via precorrin-1. Then it catalyzes the NAD-dependent ring dehydrogenation of precorrin-2 to yield sirohydrochlorin. Finally, it catalyzes the ferrochelation of sirohydrochlorin to yield siroheme. This chain is Siroheme synthase, found in Blochmanniella floridana.